The chain runs to 1023 residues: Sodium/potassium-transporting ATPase subunit alpha-1 (1023 aa).

Residues 1–5 constitute a propeptide that is removed on maturation; sequence MGLGK. The segment covering 1–11 has biased composition (basic and acidic residues); sequence MGLGKGKDEYK. Residues 1 to 33 form a disordered region; sequence MGLGKGKDEYKLAATSEDGGKKDKKAKAKKDMD. The Cytoplasmic portion of the chain corresponds to 6–87; it reads GKDEYKLAAT…NALTPPPTTP (82 aa). Serine 16 is subject to Phosphoserine; by PKC. The interaction with phosphoinositide-3 kinase stretch occupies residues 82–84; that stretch reads PPP. Residues 88 to 108 form a helical membrane-spanning segment; sequence EWVKFCKQLFGGFSMLLWIGA. Topologically, residues 109 to 131 are extracellular; it reads ILCFLAYGIQAASEDEPANDNLY. A helical membrane pass occupies residues 132-152; that stretch reads LGIVLSAVVIITGCFSYYQEA. At 153–288 the chain is on the cytoplasmic side; sequence KSSKIMESFK…GGKTPIAIEI (136 aa). The tract at residues 216–237 is disordered; the sequence is SSLTGESEPQTRSPDFSNENPL. A helical membrane pass occupies residues 289-308; sequence EHFIHIITGVAVFLGVSFFI. At 309–320 the chain is on the extracellular side; the sequence is LSLILGYNWLEA. The chain crosses the membrane as a helical span at residues 321-338; that stretch reads VIFLIGIIVANVPEGLLA. Over 339–772 the chain is Cytoplasmic; it reads TVTVCLTLTA…EEGRLIFDNL (434 aa). Aspartate 376 functions as the 4-aspartylphosphate intermediate in the catalytic mechanism. Lysine 487 contacts ATP. Mg(2+) is bound by residues aspartate 717 and aspartate 721. The chain crosses the membrane as a helical span at residues 773–792; it reads KKSIAYTLTSNIPEISPFLL. Topologically, residues 793 to 802 are extracellular; the sequence is FIIANIPLPL. The helical transmembrane segment at 803 to 823 threads the bilayer; it reads GTVTILCIDLGTDMVPAISLA. The Cytoplasmic segment spans residues 824-843; sequence YEKAESDIMKRQPRNPKTDK. The chain crosses the membrane as a helical span at residues 844–866; it reads LVNERLISIAYGQIGMMQATAGF. The Extracellular segment spans residues 867–918; the sequence is FTYFVILAENGFLPMDLIGVRVLWDDKYVNDLEDSYGQQWTYERRKIVEYSC. A helical transmembrane segment spans residues 919 to 938; sequence HTAFFASIVIVQWADLIICK. At 939–951 the chain is on the cytoplasmic side; that stretch reads TRRNSIVQQGMTN. Serine 943 carries the phosphoserine; by PKA modification. A helical transmembrane segment spans residues 952–970; sequence RILIFGLFEETALAAFLSY. Over 971 to 985 the chain is Extracellular; the sequence is CPGMDVALRMYPMKP. The helical transmembrane segment at 986 to 1006 threads the bilayer; it reads LWWFCAFPYSLLIFLYDEARR. The Cytoplasmic segment spans residues 1007–1023; it reads YILRRNPGGWVEKETYY.

It belongs to the cation transport ATPase (P-type) (TC 3.A.3) family. Type IIC subfamily. The sodium/potassium-transporting ATPase is composed of a catalytic alpha subunit, an auxiliary non-catalytic beta subunit and an additional regulatory subunit.

It is found in the cell membrane. Its subcellular location is the sarcolemma. It carries out the reaction K(+)(out) + Na(+)(in) + ATP + H2O = K(+)(in) + Na(+)(out) + ADP + phosphate + H(+). In terms of biological role, this is the catalytic component of the active enzyme, which catalyzes the hydrolysis of ATP coupled with the exchange of sodium and potassium ions across the plasma membrane. This action creates the electrochemical gradient of sodium and potassium ions, providing the energy for active transport of various nutrients. This chain is Sodium/potassium-transporting ATPase subunit alpha-1 (atp1a1), found in Oreochromis mossambicus (Mozambique tilapia).